The following is a 98-amino-acid chain: Large ribosomal subunit protein uL23 (98 aa).

It belongs to the universal ribosomal protein uL23 family. Part of the 50S ribosomal subunit. Contacts protein L29, and trigger factor when it is bound to the ribosome.

Functionally, one of the early assembly proteins it binds 23S rRNA. One of the proteins that surrounds the polypeptide exit tunnel on the outside of the ribosome. Forms the main docking site for trigger factor binding to the ribosome. The polypeptide is Large ribosomal subunit protein uL23 (Streptococcus sanguinis (strain SK36)).